A 274-amino-acid polypeptide reads, in one-letter code: Large ribosomal subunit protein uL2 (274 aa).

The interval 220-259 (VRGAAMNPRDHPHGGGEGRAPRGMSTPKTKWGKPARGVKT) is disordered. Residues 227 to 239 (PRDHPHGGGEGRA) show a composition bias toward basic and acidic residues. Positions 249-259 (KWGKPARGVKT) are enriched in basic residues.

The protein belongs to the universal ribosomal protein uL2 family. Part of the 50S ribosomal subunit. Forms a bridge to the 30S subunit in the 70S ribosome.

Its function is as follows. One of the primary rRNA binding proteins. Required for association of the 30S and 50S subunits to form the 70S ribosome, for tRNA binding and peptide bond formation. It has been suggested to have peptidyltransferase activity; this is somewhat controversial. Makes several contacts with the 16S rRNA in the 70S ribosome. This chain is Large ribosomal subunit protein uL2, found in Chloroflexus aggregans (strain MD-66 / DSM 9485).